A 161-amino-acid chain; its full sequence is Peroxynitrite isomerase 2 (161 aa).

The GXWXGXG signature appears at 17-23; sequence GTWTGRG. Residue His-152 participates in heme b binding.

This sequence belongs to the nitrobindin family. As to quaternary structure, homodimer. Heme b serves as cofactor.

The catalysed reaction is peroxynitrite = nitrate. The protein operates within nitrogen metabolism. In terms of biological role, heme-binding protein able to scavenge peroxynitrite and to protect free L-tyrosine against peroxynitrite-mediated nitration, by acting as a peroxynitrite isomerase that converts peroxynitrite to nitrate. Therefore, this protein likely plays a role in peroxynitrite sensing and in the detoxification of reactive nitrogen and oxygen species (RNS and ROS, respectively). Is able to bind nitric oxide (NO) in vitro, but may act as a sensor of peroxynitrite levels in vivo. This is Peroxynitrite isomerase 2 from Mycobacterium avium (strain 104).